A 117-amino-acid chain; its full sequence is Large ribosomal subunit protein bL19 (117 aa).

It belongs to the bacterial ribosomal protein bL19 family.

Its function is as follows. This protein is located at the 30S-50S ribosomal subunit interface and may play a role in the structure and function of the aminoacyl-tRNA binding site. The polypeptide is Large ribosomal subunit protein bL19 (Micrococcus luteus (strain ATCC 4698 / DSM 20030 / JCM 1464 / CCM 169 / CCUG 5858 / IAM 1056 / NBRC 3333 / NCIMB 9278 / NCTC 2665 / VKM Ac-2230) (Micrococcus lysodeikticus)).